Consider the following 99-residue polypeptide: Class II hydrophobin 2 (99 aa).

A signal peptide spans 1–15 (MKFFVVAALFAGALA). 2 cysteine pairs are disulfide-bonded: Cys30–Cys79 and Cys40–Cys70.

Belongs to the cerato-ulmin hydrophobin family. As to quaternary structure, homotetramer. Further self-assembles to form highly ordered films at water-air interfaces through intermolecular interactions.

The protein localises to the secreted. The protein resides in the cell wall. Functionally, aerial growth, conidiation, and dispersal of filamentous fungi in the environment rely upon a capability of their secreting small amphipathic proteins called hydrophobins (HPBs) with low sequence identity. Class I can self-assemble into an outermost layer of rodlet bundles on aerial cell surfaces, conferring cellular hydrophobicity that supports fungal growth, development and dispersal; whereas Class II form highly ordered films at water-air interfaces through intermolecular interactions but contribute nothing to the rodlet structure. HYD2 is a class II hydrophobin that contributes to the fruiting body development. The polypeptide is Class II hydrophobin 2 (Cordyceps militaris (Caterpillar fungus)).